The primary structure comprises 130 residues: uncharacterized protein (130 aa).

This sequence belongs to the thioester dehydratase family. FabZ subfamily.

This is an uncharacterized protein from Bacillus subtilis (strain 168).